Consider the following 419-residue polypeptide: Serine/threonine-protein kinase Kist (419 aa).

A Protein kinase domain is found at 23 to 304 (WQVQSRLGSG…AEMALCSPFF (282 aa)). ATP-binding positions include 29–37 (LGSGSSASV) and K54. Active-site proton acceptor residues include D141 and D158. Positions 324-406 (RLLNVLDDDY…KFVVATFYPL (83 aa)) constitute an RRM domain.

It belongs to the protein kinase superfamily. Ser/Thr protein kinase family. Interacts with stathmin and CDKN1B/p27Kip1 Interacts with PAM. As to expression, in the embryo, preferentially expressed in the developing nervous system.

The protein localises to the cytoplasm. It localises to the nucleus. It catalyses the reaction L-seryl-[protein] + ATP = O-phospho-L-seryl-[protein] + ADP + H(+). The catalysed reaction is L-threonyl-[protein] + ATP = O-phospho-L-threonyl-[protein] + ADP + H(+). Its function is as follows. Upon serum stimulation, phosphorylates CDKN1B/p27Kip1, thus controlling CDKN1B subcellular location and cell cycle progression in G1 phase. May be involved in trafficking and/or processing of RNA. This chain is Serine/threonine-protein kinase Kist (Uhmk1), found in Rattus norvegicus (Rat).